A 472-amino-acid polypeptide reads, in one-letter code: MKGAAFVKKEGLKQKALEIGRVPTHLKLEIEDYGGDDKRAHFCWADPQDENTGIIVELGPDGELESLSRDIEPESGERLSEEKLEDIMRQFVETHHPGALSAFVREENDRAYGDKVRFSYVQMEAGLPLPMSGFMADVSLSGEIVYFRYYGEAGSIIKPKRVADVEEALAFIKKDVEFDLLFEVLHRSVYKNGDDQPHLVYEPEGRAITVPADLVQEEQAVDDDDDYREPESFPLPLFEGIREKADPDSMIGIENGFVKEREADLGDGRIGIVWRNPDDPVYQPADKSMDSWFKGRTHQVLKTIYNKETGKLEGVMSFMEKKGPLTVTLAECEKIALRFLFALFPNADQYFRIRYDEKDEEENAVAGFTFEAHCHGVPLRFGQIRICVSRQTGYITVYMGPDIDPNKLATIDPVPAISVEQAKSIFWQHFKVELGWEREYGDDEEHSYRLVYKPVYPHFIDAHTGEPVFSIW.

It to B.subtilis YcdC.

This is an uncharacterized protein from Bacillus subtilis (strain 168).